Consider the following 406-residue polypeptide: Riboflavin biosynthesis protein RibBA (406 aa).

The DHBP synthase stretch occupies residues 1 to 209 (MSEREEFKFN…IADLIKYRLR (209 aa)). Residues 33–34 (RE), Asp38, 148–152 (RAGHT), and Glu172 each bind D-ribulose 5-phosphate. A Mg(2+)-binding site is contributed by Glu34. His151 lines the Mg(2+) pocket. A GTP cyclohydrolase II region spans residues 210–406 (RETLVEKVAS…VKKDKLGHMF (197 aa)). 260–264 (RVHSE) contributes to the GTP binding site. Zn(2+) is bound by residues Cys265, Cys276, and Cys278. Residues Gln281, 304–306 (EGR), and Thr326 each bind GTP. The active-site Proton acceptor; for GTP cyclohydrolase activity is Asp338. Arg340 functions as the Nucleophile; for GTP cyclohydrolase activity in the catalytic mechanism. GTP contacts are provided by Thr361 and Lys366.

This sequence in the N-terminal section; belongs to the DHBP synthase family. It in the C-terminal section; belongs to the GTP cyclohydrolase II family. Mg(2+) is required as a cofactor. Mn(2+) serves as cofactor. Requires Zn(2+) as cofactor.

It catalyses the reaction D-ribulose 5-phosphate = (2S)-2-hydroxy-3-oxobutyl phosphate + formate + H(+). The catalysed reaction is GTP + 4 H2O = 2,5-diamino-6-hydroxy-4-(5-phosphoribosylamino)-pyrimidine + formate + 2 phosphate + 3 H(+). Its pathway is cofactor biosynthesis; riboflavin biosynthesis; 2-hydroxy-3-oxobutyl phosphate from D-ribulose 5-phosphate: step 1/1. It functions in the pathway cofactor biosynthesis; riboflavin biosynthesis; 5-amino-6-(D-ribitylamino)uracil from GTP: step 1/4. In terms of biological role, catalyzes the conversion of D-ribulose 5-phosphate to formate and 3,4-dihydroxy-2-butanone 4-phosphate. Functionally, catalyzes the conversion of GTP to 2,5-diamino-6-ribosylamino-4(3H)-pyrimidinone 5'-phosphate (DARP), formate and pyrophosphate. This Aquifex aeolicus (strain VF5) protein is Riboflavin biosynthesis protein RibBA.